The primary structure comprises 137 residues: 2-iminobutanoate/2-iminopropanoate deaminase (137 aa).

The residue at position 2 (serine 2) is an N-acetylserine. Residues lysine 13 and lysine 67 each carry the N6-succinyllysine modification. Phosphothreonine is present on threonine 74. Serine 136 carries the phosphoserine modification.

Homotrimer. Interacts with YTHDF2. Expressed by various malignant neoplasms.

It is found in the cytoplasm. It localises to the nucleus. The protein resides in the peroxisome. The protein localises to the mitochondrion. The catalysed reaction is 2-iminobutanoate + H2O = 2-oxobutanoate + NH4(+). The enzyme catalyses 2-iminopropanoate + H2O = pyruvate + NH4(+). Catalyzes the hydrolytic deamination of enamine/imine intermediates that form during the course of normal metabolism. May facilitate the release of ammonia from these potentially toxic reactive metabolites, reducing their impact on cellular components. It may act on enamine/imine intermediates formed by several types of pyridoxal-5'-phosphate-dependent dehydratases including L-threonine dehydratase. Its function is as follows. Also promotes endoribonucleolytic cleavage of some transcripts by promoting recruitment of the ribonuclease P/MRP complex. Acts by bridging YTHDF2 and the ribonuclease P/MRP complex. RIDA/HRSP12 binds to N6-methyladenosine (m6A)-containing mRNAs containing a 5'-GGUUC-3' motif: cooperative binding of RIDA/HRSP12 and YTHDF2 to such transcripts lead to recruitment of the ribonuclease P/MRP complex and subsequent endoribonucleolytic cleavage. This is 2-iminobutanoate/2-iminopropanoate deaminase from Capra hircus (Goat).